We begin with the raw amino-acid sequence, 90 residues long: Small ribosomal subunit protein uS15c (90 aa).

The protein belongs to the universal ribosomal protein uS15 family. In terms of assembly, part of the 30S ribosomal subunit.

Its subcellular location is the plastid. It localises to the chloroplast. In Morus indica (Mulberry), this protein is Small ribosomal subunit protein uS15c (rps15).